The following is a 734-amino-acid chain: MYHTHMHESLISVTSTVSVSDASYAYARLTRRDDSDSSSSSASSTKNSKSAECTGSKQQCQLPTDSSHSTSVTVGVAVAVPVGVIIIVLAVILCIVYRRSKKEAEEDNDPDFEGDSEFLPTMKDYSPGINHLYSSDSQQDFMEKTLQQPPSDPFVGSMHSSKYNVRSATPPAIGRSWYVDPFQLPQESNDSNSLRDFAMRVQEDGLGGYKVAAESRNASQTSLHPDNFSNCTPIRASSRFQESESFRSHGSPIHNNQLSRGSATEGANKQFTFPNEDNDSSSVSEEAEVLNESNESASNDAFEFELDNSSEKTHERNLRFGKDDDNYELQDIREAEHMNDRSSSKSQDDDYYVSLLSPNEEEDIKRMKSIYQVYLDRAKTMKKEEDKADNANDISQEENRVDNIVQNPLPSIKINNNDNIDNNEVPEAKHLVKEALPLNNTNLAEYGPEMAQSQKQYPVQDTLTVNDTEAAPSNRIASSIYSEAIQPLNYQDQYQQQEQSPVYNGHTQYPGNGYSGNPQQQGYTAQFVQNPQWYGVPTPQQQQHNHPQTLETIGELPTPAYLAQSASSHSLTSFKRPNKQQLLQLQTARLNGTALNPVDHPEMFYSPTNDAYYAPQQQGQYMKFNENGAVPSPYQLRQSVVMTNPSDLTAKPSYKPAGSFRSVSATNSRNNSLTTQNNIYLQQQQQQLYNSRVSGILEETDVVQPPSVGGILPHSGSQDDLRKQLGSSHNYTVN.

Residues 30–68 (TRRDDSDSSSSSASSTKNSKSAECTGSKQQCQLPTDSSH) are disordered. A compositionally biased stretch (low complexity) spans 37–51 (SSSSSASSTKNSKSA). A compositionally biased stretch (polar residues) spans 53-68 (CTGSKQQCQLPTDSSH). The chain crosses the membrane as a helical span at residues 72–96 (VTVGVAVAVPVGVIIIVLAVILCIV). A Phosphoserine modification is found at S137. A Phosphothreonine modification is found at T169. S191, S193, and S219 each carry phosphoserine. The residue at position 221 (T221) is a Phosphothreonine. Phosphoserine is present on residues S222 and S251. A disordered region spans residues 239-327 (RFQESESFRS…LRFGKDDDNY (89 aa)). Residues 253-273 (IHNNQLSRGSATEGANKQFTF) are compositionally biased toward polar residues. The span at 280–299 (SSSVSEEAEVLNESNESASN) shows a compositional bias: low complexity. Positions 309 to 327 (SSEKTHERNLRFGKDDDNY) are enriched in basic and acidic residues. Phosphoserine is present on S369. Residues 647 to 671 (DLTAKPSYKPAGSFRSVSATNSRNN) form a disordered region. Residues 661–671 (RSVSATNSRNN) show a composition bias toward polar residues. Residues S672 and S717 each carry the phosphoserine modification. The segment at 707-734 (SVGGILPHSGSQDDLRKQLGSSHNYTVN) is disordered. The span at 725–734 (LGSSHNYTVN) shows a compositional bias: polar residues.

It belongs to the SKG6/TOS2 family. In terms of assembly, interacts with ZDS1 and ZDS2. Phosphorylated by CDC28.

It is found in the membrane. May be involved in the polarity establishment process. Suppresses the lethality of KEX2-GAS1 double null mutant when overexpressed. The sequence is that of Protein SKG6 (SKG6) from Saccharomyces cerevisiae (strain ATCC 204508 / S288c) (Baker's yeast).